The sequence spans 95 residues: Small ribosomal subunit protein bS18 (95 aa).

Belongs to the bacterial ribosomal protein bS18 family. In terms of assembly, part of the 30S ribosomal subunit. Forms a tight heterodimer with protein bS6.

Binds as a heterodimer with protein bS6 to the central domain of the 16S rRNA, where it helps stabilize the platform of the 30S subunit. The polypeptide is Small ribosomal subunit protein bS18 (Acidiphilium cryptum (strain JF-5)).